Consider the following 438-residue polypeptide: Iroquois-class homeodomain protein IRX-6 (438 aa).

Residues 143–205 (SAGRRKNATR…NARRRLKKEN (63 aa)) constitute a DNA-binding region (homeobox). Disordered regions lie at residues 205–270 (NKMT…EAAV) and 388–438 (PRDS…GAEG). Positions 214–223 (KGGEERKADS) are enriched in basic and acidic residues. Residues 252–268 (LEDLEEEEEEEEAEEEA) show a composition bias toward acidic residues.

The protein belongs to the TALE/IRO homeobox family. As to expression, expressed in a subset of retinal ganglion cells and bipolar cells; including in type 2 and type 3a bipolar cells.

It is found in the nucleus. Its function is as follows. Transcription factor. Binds to the iroquois binding site (IBS) motif of target genes to regulate gene expression; functions as a transcriptional activator or repressor. Modulates expression of RCVRN, VSX1, BHLHE22/BHLHB5 and TACR3/Nk3r. Required downstream of retinal bipolar cell specification for the terminal differentiation of type 2, type 3a and possibly type 6 bipolar cells. The sequence is that of Iroquois-class homeodomain protein IRX-6 (Irx6) from Mus musculus (Mouse).